Reading from the N-terminus, the 254-residue chain is Probable WRKY transcription factor 67 (254 aa).

Positions 102 to 170 (SRTMCPNDGF…YLGKHVCKAF (69 aa)) form a DNA-binding region, WRKY.

The protein belongs to the WRKY group III family.

The protein resides in the nucleus. Transcription factor. Interacts specifically with the W box (5'-(T)TGAC[CT]-3'), a frequently occurring elicitor-responsive cis-acting element. The protein is Probable WRKY transcription factor 67 (WRKY67) of Arabidopsis thaliana (Mouse-ear cress).